The chain runs to 254 residues: Imidazole glycerol phosphate synthase subunit HisF (254 aa).

Active-site residues include aspartate 14 and aspartate 133.

The protein belongs to the HisA/HisF family. In terms of assembly, heterodimer of HisH and HisF.

Its subcellular location is the cytoplasm. It carries out the reaction 5-[(5-phospho-1-deoxy-D-ribulos-1-ylimino)methylamino]-1-(5-phospho-beta-D-ribosyl)imidazole-4-carboxamide + L-glutamine = D-erythro-1-(imidazol-4-yl)glycerol 3-phosphate + 5-amino-1-(5-phospho-beta-D-ribosyl)imidazole-4-carboxamide + L-glutamate + H(+). It participates in amino-acid biosynthesis; L-histidine biosynthesis; L-histidine from 5-phospho-alpha-D-ribose 1-diphosphate: step 5/9. IGPS catalyzes the conversion of PRFAR and glutamine to IGP, AICAR and glutamate. The HisF subunit catalyzes the cyclization activity that produces IGP and AICAR from PRFAR using the ammonia provided by the HisH subunit. The polypeptide is Imidazole glycerol phosphate synthase subunit HisF (Nitratiruptor sp. (strain SB155-2)).